A 108-amino-acid chain; its full sequence is UPF0060 membrane protein RSKD131_0092 (108 aa).

4 helical membrane passes run 5–25 (LAAY…VWAW), 32–52 (ALWL…LALT), 62–82 (AVYG…VEGV), and 86–106 (RWDM…LWAP).

It belongs to the UPF0060 family.

The protein resides in the cell inner membrane. This Cereibacter sphaeroides (strain KD131 / KCTC 12085) (Rhodobacter sphaeroides) protein is UPF0060 membrane protein RSKD131_0092.